Reading from the N-terminus, the 70-residue chain is MLNPSIDSLLTKIDSKYTLVTVAAKRAREMQLANNCVVEKPVSHKCVGKALEEIDMEALSYVPSEDKVTE.

Belongs to the RNA polymerase subunit omega family. The RNAP catalytic core consists of 2 alpha, 1 beta, 1 beta' and 1 omega subunit. When a sigma factor is associated with the core the holoenzyme is formed, which can initiate transcription.

It catalyses the reaction RNA(n) + a ribonucleoside 5'-triphosphate = RNA(n+1) + diphosphate. Functionally, promotes RNA polymerase assembly. Latches the N- and C-terminal regions of the beta' subunit thereby facilitating its interaction with the beta and alpha subunits. In Bacillus anthracis, this protein is DNA-directed RNA polymerase subunit omega.